A 215-amino-acid polypeptide reads, in one-letter code: Adenylyl-sulfate kinase (215 aa).

46 to 53 contacts ATP; it reads GLSGAGKS. S120 (phosphoserine intermediate) is an active-site residue.

It belongs to the APS kinase family.

The enzyme catalyses adenosine 5'-phosphosulfate + ATP = 3'-phosphoadenylyl sulfate + ADP + H(+). The protein operates within sulfur metabolism; hydrogen sulfide biosynthesis; sulfite from sulfate: step 2/3. Functionally, catalyzes the synthesis of activated sulfate. The polypeptide is Adenylyl-sulfate kinase (cysC) (Vibrio cholerae serotype O1 (strain ATCC 39315 / El Tor Inaba N16961)).